The following is a 367-amino-acid chain: Epoxide hydrolase 3 (367 aa).

Residues 21 to 41 (GVFFWVLVYVAALLAAVSYIP) traverse the membrane as a helical segment. Aspartate 173 (nucleophile) is an active-site residue. Tyrosine 285 functions as the Proton donor in the catalytic mechanism. Histidine 340 acts as the Proton acceptor in catalysis.

Belongs to the AB hydrolase superfamily. Epoxide hydrolase family.

It is found in the microsome membrane. It carries out the reaction an epoxide + H2O = an ethanediol. The enzyme catalyses 9,10-epoxyoctadecanoate + H2O = 9,10-dihydroxyoctadecanoate. The catalysed reaction is 9,10-epoxy-(12Z)-octadecenoate + H2O = 9,10-dihydroxy-(12Z)-octadecenoate. It catalyses the reaction 8,9-epoxy-(5Z,11Z,14Z)-eicosatrienoate + H2O = 8,9-dihydroxy-(5Z,11Z,14Z)-eicosatrienoate. It carries out the reaction 11,12-epoxy-(5Z,8Z,14Z)-eicosatrienoate + H2O = 11,12-dihydroxy-(5Z,8Z,14Z)-eicosatrienoate. The enzyme catalyses 14,15-epoxy-(5Z,8Z,11Z)-eicosatrienoate + H2O = 14,15-dihydroxy-(5Z,8Z,11Z)-eicosatrienoate. Inhibited by 1-(1-acetylpiperidin-4-yl)-3-(4-(trifl uoromethoxy)phenyl)urea (TPAU), 1-cyclohexyl-3-dodecylurea (CDU), 12-(3-adamantan-1-yl-ureido)-dodecanoic acid (AUDA), 1-((3S, 5S, 7S)-adamantan-1-yl)-3-(5-(2-(2-ethoxyethoxy) ethoxy)pentyl)urea (AEPU) and to a lesser extent by 8-(3-((3S, 5S, 7S)-adamantan-1-yl)ureido) octanoic acid (AUOA). Catalyzes the hydrolysis of epoxide-containing fatty acids. Active in vitro against epoxyeicosatrienoic acids (EETs) including 8,9-EET, 9,10-EET, 11,12-EET and 14,15-EET and leukotoxin. The sequence is that of Epoxide hydrolase 3 (ephx3) from Xenopus tropicalis (Western clawed frog).